Reading from the N-terminus, the 441-residue chain is Phosphoglucosamine mutase (441 aa).

The active-site Phosphoserine intermediate is the Ser100. Residues Ser100, Asp239, Asp241, and Asp243 each contribute to the Mg(2+) site. Ser100 is modified (phosphoserine).

Belongs to the phosphohexose mutase family. The cofactor is Mg(2+). In terms of processing, activated by phosphorylation.

The enzyme catalyses alpha-D-glucosamine 1-phosphate = D-glucosamine 6-phosphate. Catalyzes the conversion of glucosamine-6-phosphate to glucosamine-1-phosphate. This Ruthia magnifica subsp. Calyptogena magnifica protein is Phosphoglucosamine mutase.